The sequence spans 459 residues: Friend virus susceptibility protein 1 (459 aa).

A disordered region spans residues 192-269 (EAELPTVLAS…LNSLAHSNRQ (78 aa)). Positions 213–223 (SKERTQQDKAD) are enriched in basic and acidic residues. A compositionally biased stretch (polar residues) spans 226–238 (QIQSSTSLVTSEP).

Functionally, retroviral restriction factor that prevents infection by gammaretroviruses. Acts by interacting with the capsid protein ca after entry of the virus into the cell. This interaction presumably disrupt the capsid thereby inactivating the viral genome, making it unable to enter host nucleus and integrate into host genome. In Mus musculus (Mouse), this protein is Friend virus susceptibility protein 1 (Fv1).